Consider the following 904-residue polypeptide: Essential for maintenance of the cell wall protein 1 (904 aa).

TPR repeat units follow at residues 510-544 (WQLDATLAEKYMSLGILKSAVEIYERLGMACETAL), 563-596 (INENDSDARAYSILGDIKQDPSLWEKSWEIGKYV), 603-636 (AKYYFNPPPKSGAQPNYSATLKHLNDSLRQYPLS), 637-670 (FETWYFYGCVGLQCGKMQIAAEAFTRCVSLDPYH), 671-704 (ALSWSNLSAAYTKMDKLKEAYSCLKRAISCDAQK), and 706-739 (WKIWENYMLVAVKLNEWEDVLTACKQLVSIRRDK).

This sequence belongs to the TTC27 family.

The protein resides in the cytoplasm. The protein localises to the nucleus. In terms of biological role, required for the maintenance of the cell wall integrity. This is Essential for maintenance of the cell wall protein 1 (EMW1) from Saccharomyces cerevisiae (strain ATCC 204508 / S288c) (Baker's yeast).